Reading from the N-terminus, the 401-residue chain is uncharacterized protein (401 aa).

The next 10 helical transmembrane spans lie at 20–40 (FFGE…MVLY), 49–69 (IMMP…LTLA), 83–100 (ILTA…FVFA), 104–121 (YVFA…SLYI), 140–160 (VFAV…LVGM), 167–187 (PVWI…IAAL), 207–227 (FTIY…SMLY), 248–268 (MLTI…VPLV), 289–309 (LAAA…TAAV), and 357–377 (GLIL…VCLL).

It belongs to the major facilitator superfamily.

It is found in the cell membrane. This is an uncharacterized protein from Bacillus subtilis (strain 168).